The sequence spans 36 residues: Dolichyl-diphosphooligosaccharide--protein glycosyltransferase subunit 2 (36 aa).

This sequence belongs to the SWP1 family. Component of the oligosaccharyltransferase (OST) complex.

The protein localises to the endoplasmic reticulum. It is found in the endoplasmic reticulum membrane. It participates in protein modification; protein glycosylation. Subunit of the oligosaccharyl transferase (OST) complex that catalyzes the initial transfer of a defined glycan (Glc(3)Man(9)GlcNAc(2) in eukaryotes) from the lipid carrier dolichol-pyrophosphate to an asparagine residue within an Asn-X-Ser/Thr consensus motif in nascent polypeptide chains, the first step in protein N-glycosylation. N-glycosylation occurs cotranslationally and the complex associates with the Sec61 complex at the channel-forming translocon complex that mediates protein translocation across the endoplasmic reticulum (ER). All subunits are required for a maximal enzyme activity. This Gallus gallus (Chicken) protein is Dolichyl-diphosphooligosaccharide--protein glycosyltransferase subunit 2.